A 602-amino-acid chain; its full sequence is Sodium- and chloride-dependent GABA transporter 2 (602 aa).

At 1–40 (MENRASGTTSNGETKPVCPAMEKVEEDGTLEREHWNNKME) the chain is on the cytoplasmic side. The next 3 membrane-spanning stretches (helical) occupy residues 41–61 (FVLS…FPYL), 68–88 (GAFF…VFFL), and 121–141 (IVSL…FYLF). The Extracellular portion of the chain corresponds to 142–206 (SSFTTDLPWG…GIQHLGSLRW (65 aa)). The cysteines at positions 153 and 162 are disulfide-linked. 3 N-linked (GlcNAc...) asparagine glycosylation sites follow: asparagine 169, asparagine 173, and asparagine 178. Transmembrane regions (helical) follow at residues 207–227 (ELVL…WKGV) and 233–253 (VVYF…IRGV). Asparagine 269 carries N-linked (GlcNAc...) asparagine glycosylation. A run of 7 helical transmembrane segments spans residues 282–302 (AGTQ…ALGS), 319–339 (ILNS…LGFM), 366–386 (VVML…VVLL), 418–438 (VLIL…LTEG), 453–473 (GMCL…VYGA), 490–510 (PLIK…TFLF), and 528–548 (WWGD…IPAW). Residues 549 to 602 (SIYKLRTLKGPLRERLRQLVCPAEDLPQKNQPEPTAPATPMTSLLRLTELESNC) are Cytoplasmic-facing. Residue threonine 587 is modified to Phosphothreonine. The residue at position 591 (serine 591) is a Phosphoserine.

This sequence belongs to the sodium:neurotransmitter symporter (SNF) (TC 2.A.22) family. SLC6A13 subfamily. In terms of tissue distribution, expressed at high levels in liver, followed by kidney and leptomeninges, and very low levels in the cerebellum (at protein level). In the brain, detected in some blood vessels (at protein level). In the kidney, expressed in the cortex, including parts of the proximal tubules, but not in the medulla (at protein level). In the liver, highest expression in periportal hepatocytes, with highest density at the vascular side (at protein level). Also detected at low levels in other organs, including skeletal muscle.

It is found in the cell membrane. The protein localises to the basolateral cell membrane. The catalysed reaction is 4-aminobutanoate(out) + chloride(out) + 2 Na(+)(out) = 4-aminobutanoate(in) + chloride(in) + 2 Na(+)(in). It carries out the reaction taurine(out) + chloride(out) + 2 Na(+)(out) = taurine(in) + chloride(in) + 2 Na(+)(in). The enzyme catalyses beta-alanine(out) + chloride(out) + 2 Na(+)(out) = beta-alanine(in) + chloride(in) + 2 Na(+)(in). It catalyses the reaction hypotaurine(out) + chloride(out) + 2 Na(+)(out) = hypotaurine(in) + chloride(in) + 2 Na(+)(in). Its activity is regulated as follows. Gamma-aminobutyric acid (GABA) transport is inhibited by beta-alanine, taurine, hypotaurine, beta-guanidinopropionic acid, 2,3-diaminopropionic acid, guvacine and nipecotic acid. Beta-alanine transport is inhibited by GABA. Taurine transport is inhibited by GABA, beta-alanine, SNAP-5114, nigericin, nipecotic acid and ouabain. Functionally, mediates sodium- and chloride-dependent transport of gamma-aminobutyric acid (GABA). Can also mediate transport of beta-alanine, taurine and hypotaurine and is the major taurine transporter in hepatocytes. The chain is Sodium- and chloride-dependent GABA transporter 2 (Slc6a13) from Mus musculus (Mouse).